Consider the following 438-residue polypeptide: Xanthine permease (438 aa).

Helical transmembrane passes span 11–31 (LGIQHVLAMYAGAIVVPLIVG), 41–61 (LTYLVSIDIFMCGVATLLQVW), 65–85 (FFGIGLPVVLGCTFTAVSPMI), 100–120 (IIASGILVILISFFFGKLVSF), 121–141 (FPPVVTGSVVTIIGITLMPVA), 154–174 (FGDLSNLALAFTVLSIIVLLY), 180–200 (FIKSVSILIGILIGTFIAYFM), 220–240 (FYFGAPSFHAAPIITMSIVAI), 272–292 (AEGLAVLLGGIFNAFPYTAFS), 308–328 (VIVVTGVILMAFGLFPKIAAF), 331–351 (IIPSAVLGGAMVAMFGMVIAY), 367–387 (LLIVACSVGLGLGVTVVPDIF), and 396–416 (LLTTNGIVAGSFTAVVLNIVY).

Belongs to the nucleobase:cation symporter-2 (NCS2) (TC 2.A.40) family.

It is found in the cell membrane. Functionally, transport of xanthine in the cell. This chain is Xanthine permease (pbuX), found in Bacillus subtilis (strain 168).